We begin with the raw amino-acid sequence, 210 residues long: Large ribosomal subunit protein uL3 (210 aa).

An N5-methylglutamine modification is found at Q151.

This sequence belongs to the universal ribosomal protein uL3 family. As to quaternary structure, part of the 50S ribosomal subunit. Forms a cluster with proteins L14 and L19. Post-translationally, methylated by PrmB.

Its function is as follows. One of the primary rRNA binding proteins, it binds directly near the 3'-end of the 23S rRNA, where it nucleates assembly of the 50S subunit. In Aeromonas hydrophila subsp. hydrophila (strain ATCC 7966 / DSM 30187 / BCRC 13018 / CCUG 14551 / JCM 1027 / KCTC 2358 / NCIMB 9240 / NCTC 8049), this protein is Large ribosomal subunit protein uL3.